The sequence spans 122 residues: Large ribosomal subunit protein uL14 (122 aa).

It belongs to the universal ribosomal protein uL14 family. As to quaternary structure, part of the 50S ribosomal subunit. Forms a cluster with proteins L3 and L19. In the 70S ribosome, L14 and L19 interact and together make contacts with the 16S rRNA in bridges B5 and B8.

Functionally, binds to 23S rRNA. Forms part of two intersubunit bridges in the 70S ribosome. The protein is Large ribosomal subunit protein uL14 of Gloeothece citriformis (strain PCC 7424) (Cyanothece sp. (strain PCC 7424)).